The primary structure comprises 408 residues: Metacaspase-1B (408 aa).

Residues 1–98 (MYHRHSAPPP…PPLEAQQFGN (98 aa)) form a disordered region. Composition is skewed to pro residues over residues 24–49 (WPPP…FPPP) and 56–66 (SPYPTPPPHSP). Residues histidine 199 and cysteine 255 contribute to the active site.

The protein belongs to the peptidase C14B family.

In terms of biological role, involved in cell death (apoptosis). Required for the apoptotic-like loss of membrane phospholipid asymmetry at stationary phase and facilitates growth under conditions of endoplasmic reticulum stress. The protein is Metacaspase-1B (casB) of Aspergillus fumigatus (strain CBS 144.89 / FGSC A1163 / CEA10) (Neosartorya fumigata).